The following is a 341-amino-acid chain: Probable galacturonosyltransferase-like 2 (341 aa).

Residues 1–4 are Cytoplasmic-facing; that stretch reads MHSK. The helical; Signal-anchor for type II membrane protein transmembrane segment at 5 to 22 threads the bilayer; the sequence is FILYLSILAVFTVSFAGG. Over 23 to 341 the chain is Lumenal; the sequence is ERFKEAPKFF…LESRFDLIES (319 aa). N190 is a glycosylation site (N-linked (GlcNAc...) asparagine).

Belongs to the glycosyltransferase 8 family.

The protein resides in the golgi apparatus membrane. The protein operates within glycan metabolism; pectin biosynthesis. In terms of biological role, may be involved in pectin and/or xylans biosynthesis in cell walls. The chain is Probable galacturonosyltransferase-like 2 (GATL2) from Arabidopsis thaliana (Mouse-ear cress).